An 80-amino-acid chain; its full sequence is RNA-binding protein Hfq (80 aa).

Residues 10–69 form the Sm domain; it reads DPFLNTLRREHVPVSIYLVNGIKLQGQIESFDQYVVLLKNTVTQMVYKHAISTVVPARPV.

This sequence belongs to the Hfq family. In terms of assembly, homohexamer.

Its function is as follows. RNA chaperone that binds small regulatory RNA (sRNAs) and mRNAs to facilitate mRNA translational regulation in response to envelope stress, environmental stress and changes in metabolite concentrations. Also binds with high specificity to tRNAs. The protein is RNA-binding protein Hfq of Azoarcus sp. (strain BH72).